Consider the following 232-residue polypeptide: Transcriptional regulatory protein CpxR (232 aa).

The Response regulatory domain maps to 3-115; sequence KILLVDDDRE…ELVARIRAIL (113 aa). Position 51 is a 4-aspartylphosphate (Asp51). A DNA-binding region (ompR/PhoB-type) is located at residues 131–230; it reads SPTLEVDALS…LRGRGYLMVS (100 aa).

Interacts with cognate sensor kinase CpxA. Phosphorylated by CpxA.

Its subcellular location is the cytoplasm. With respect to regulation, the two-component system is activated by envelope stress such as overexpression of some (misfolded) periplasmic proteins. Response regulator member of the two-component regulatory system CpxA/CpxR which responds to envelope stress response by activating or, in some cases, repressing expression of downstream genes. Binds to the promoter regions of various genes in vitro, including ompC, cpxP, ryhB and mrkA and, when CpxR is phosphorylated, pecO. Represses expression of the major pilin of type 3 fimbriae MrkA as well as that of type 1 fimbriae FimA. Repression of expression of MrkA appears to be indirect, mediated by activation of the iron homeostasis regulator RyhB. This Klebsiella pneumoniae subsp. pneumoniae (strain HS11286) protein is Transcriptional regulatory protein CpxR.